Reading from the N-terminus, the 907-residue chain is Protein translocase subunit SecA (907 aa).

ATP is bound by residues Gln-87, Gly-105–Thr-109, and Asp-510. Cys-892, Cys-894, Cys-903, and His-904 together coordinate Zn(2+).

It belongs to the SecA family. Monomer and homodimer. Part of the essential Sec protein translocation apparatus which comprises SecA, SecYEG and auxiliary proteins SecDF-YajC and YidC. The cofactor is Zn(2+).

It localises to the cell inner membrane. The protein resides in the cytoplasm. The enzyme catalyses ATP + H2O + cellular proteinSide 1 = ADP + phosphate + cellular proteinSide 2.. Part of the Sec protein translocase complex. Interacts with the SecYEG preprotein conducting channel. Has a central role in coupling the hydrolysis of ATP to the transfer of proteins into and across the cell membrane, serving both as a receptor for the preprotein-SecB complex and as an ATP-driven molecular motor driving the stepwise translocation of polypeptide chains across the membrane. This Acinetobacter baumannii (strain ACICU) protein is Protein translocase subunit SecA.